A 123-amino-acid chain; its full sequence is Fluoride-specific ion channel FluC (123 aa).

The next 4 helical transmembrane spans lie at 1–21 (MQWL…GWLA), 32–52 (LGTL…LVWF), 66–86 (FVIT…AEVF), and 94–114 (LLAA…ATAL). Gly73 and Thr76 together coordinate Na(+).

This sequence belongs to the fluoride channel Fluc/FEX (TC 1.A.43) family.

It is found in the cell inner membrane. It carries out the reaction fluoride(in) = fluoride(out). Its activity is regulated as follows. Na(+) is not transported, but it plays an essential structural role and its presence is essential for fluoride channel function. In terms of biological role, fluoride-specific ion channel. Important for reducing fluoride concentration in the cell, thus reducing its toxicity. This is Fluoride-specific ion channel FluC from Psychrobacter arcticus (strain DSM 17307 / VKM B-2377 / 273-4).